We begin with the raw amino-acid sequence, 91 residues long: MKVKAFANQVHIAPRKARLVVDLIRGKQIKEAEAILMFTSKSASPIISKLLKSAVSNAVHNFKLDENNLYVEEIFVNESLRLPRLFPRAKG.

This sequence belongs to the universal ribosomal protein uL22 family. Part of the 50S ribosomal subunit.

This protein binds specifically to 23S rRNA; its binding is stimulated by other ribosomal proteins, e.g. L4, L17, and L20. It is important during the early stages of 50S assembly. It makes multiple contacts with different domains of the 23S rRNA in the assembled 50S subunit and ribosome. Functionally, the globular domain of the protein is located near the polypeptide exit tunnel on the outside of the subunit, while an extended beta-hairpin is found that lines the wall of the exit tunnel in the center of the 70S ribosome. This chain is Large ribosomal subunit protein uL22 (rplV), found in Loofah witches'-broom phytoplasma.